Consider the following 36-residue polypeptide: Photosystem I reaction center subunit VIII (36 aa).

The helical transmembrane segment at 6–28 threads the bilayer; it reads LPSIFVPLVGLMFPAIAMASLSL.

Belongs to the PsaI family.

It localises to the plastid. It is found in the chloroplast thylakoid membrane. Its function is as follows. May help in the organization of the PsaL subunit. The polypeptide is Photosystem I reaction center subunit VIII (Calycanthus floridus var. glaucus (Eastern sweetshrub)).